A 297-amino-acid chain; its full sequence is Tyrosine recombinase XerD (297 aa).

The Core-binding (CB) domain occupies 1–87 (MLEYAIEDFF…SIRSFHQFLI (87 aa)). Residues 108-291 (KLPDILSQDE…TKARLKDMYQ (184 aa)) form the Tyr recombinase domain. Residues arginine 147, lysine 171, histidine 243, arginine 246, and histidine 269 contribute to the active site. Tyrosine 278 (O-(3'-phospho-DNA)-tyrosine intermediate) is an active-site residue.

This sequence belongs to the 'phage' integrase family. XerD subfamily. As to quaternary structure, forms a cyclic heterotetrameric complex composed of two molecules of XerC and two molecules of XerD.

The protein localises to the cytoplasm. In terms of biological role, site-specific tyrosine recombinase, which acts by catalyzing the cutting and rejoining of the recombining DNA molecules. The XerC-XerD complex is essential to convert dimers of the bacterial chromosome into monomers to permit their segregation at cell division. It also contributes to the segregational stability of plasmids. In Oceanobacillus iheyensis (strain DSM 14371 / CIP 107618 / JCM 11309 / KCTC 3954 / HTE831), this protein is Tyrosine recombinase XerD.